The chain runs to 227 residues: Large ribosomal subunit protein bL25 (227 aa).

A disordered region spans residues 199 to 227 (AIAEAQSAEAAEEKAEESAEDEKKDGEEA). Over residues 209 to 227 (AEEKAEESAEDEKKDGEEA) the composition is skewed to basic and acidic residues.

The protein belongs to the bacterial ribosomal protein bL25 family. CTC subfamily. As to quaternary structure, part of the 50S ribosomal subunit; part of the 5S rRNA/L5/L18/L25 subcomplex. Contacts the 5S rRNA. Binds to the 5S rRNA independently of L5 and L18.

This is one of the proteins that binds to the 5S RNA in the ribosome where it forms part of the central protuberance. The sequence is that of Large ribosomal subunit protein bL25 from Methylobacterium radiotolerans (strain ATCC 27329 / DSM 1819 / JCM 2831 / NBRC 15690 / NCIMB 10815 / 0-1).